Here is an 85-residue protein sequence, read N- to C-terminus: Putative membrane protein insertion efficiency factor (85 aa).

Belongs to the UPF0161 family.

It localises to the cell inner membrane. Functionally, could be involved in insertion of integral membrane proteins into the membrane. The protein is Putative membrane protein insertion efficiency factor of Vibrio cholerae serotype O1 (strain ATCC 39315 / El Tor Inaba N16961).